Reading from the N-terminus, the 443-residue chain is UDP-N-acetylmuramate--L-alanine ligase (443 aa).

ATP is bound at residue 110-116 (GAHGKTS).

The protein belongs to the MurCDEF family.

Its subcellular location is the cytoplasm. The catalysed reaction is UDP-N-acetyl-alpha-D-muramate + L-alanine + ATP = UDP-N-acetyl-alpha-D-muramoyl-L-alanine + ADP + phosphate + H(+). It functions in the pathway cell wall biogenesis; peptidoglycan biosynthesis. Functionally, cell wall formation. In Streptococcus agalactiae serotype Ia (strain ATCC 27591 / A909 / CDC SS700), this protein is UDP-N-acetylmuramate--L-alanine ligase.